A 149-amino-acid chain; its full sequence is Ribosome-binding factor A (149 aa).

A disordered region spans residues 124 to 149 (AKLREGAVPAGDADPYKTSSKSESEE).

The protein belongs to the RbfA family. As to quaternary structure, monomer. Binds 30S ribosomal subunits, but not 50S ribosomal subunits or 70S ribosomes.

It localises to the cytoplasm. In terms of biological role, one of several proteins that assist in the late maturation steps of the functional core of the 30S ribosomal subunit. Associates with free 30S ribosomal subunits (but not with 30S subunits that are part of 70S ribosomes or polysomes). Required for efficient processing of 16S rRNA. May interact with the 5'-terminal helix region of 16S rRNA. In Corynebacterium glutamicum (strain R), this protein is Ribosome-binding factor A.